We begin with the raw amino-acid sequence, 65 residues long: Small, acid-soluble spore protein H 1 (65 aa).

It belongs to the SspH family.

It is found in the spore core. In Clostridium botulinum (strain Langeland / NCTC 10281 / Type F), this protein is Small, acid-soluble spore protein H 1.